A 159-amino-acid polypeptide reads, in one-letter code: Small ribosomal subunit protein uS7m (159 aa).

This sequence belongs to the universal ribosomal protein uS7 family. Part of the small ribosomal subunit.

The protein resides in the mitochondrion. Functionally, one of the primary rRNA binding proteins, it binds directly to the small rRNA where it nucleates assembly of the head domain of the small subunit. This chain is Small ribosomal subunit protein uS7m (RPS7), found in Reclinomonas americana.